A 467-amino-acid chain; its full sequence is MRISKNSHKRQRTRLYFLVTFIIYSIIPCRAVLVPWLDDDPFEATLLEMGDEPWSKDILSSTPPLHPSEVTEDNKSLKQRGNVPQYVIDNSPLLHLYSEEKYWPADVKDFVKRFQLRDHSGEKIINEHLRDLSDLQEYYSVELENGTWGRVSSEGTYMTSLDDFDKGPDWLLGEQPEYGTGHIKKAPAVLFVVDKGNGWVDAFWFYFYPFNWGPYIMGSGPWGNHVGDWEHSLVRFYKGEPQYLWMSAHGGGSAYKFEAIEKIKRLRRVDGKLTNEVIKKPLIFSARGTHAHYASVGQHAHDVPFFFMPLSDFTDRGPLWDPSLNYYAYTVTVGEKMTPCGAEETKMGLEWLSFKGAWGDKQLRPRDPRQKWCPFQWKYIDGPKGPLFKNMERVSLCQRFKWWNFWKGCPARRYIKRGEGLDAEKNDLVGDNCGILLYNIRPKWLRSILRFLTWRGSVCFIMDYFTG.

A helical membrane pass occupies residues F17–L37. N-linked (GlcNAc...) asparagine glycosylation is found at N74 and N145.

The protein belongs to the VPS62 family.

It localises to the membrane. Involved in vacuolar protein sorting. In Saccharomyces cerevisiae (strain ATCC 204508 / S288c) (Baker's yeast), this protein is Vacuolar protein sorting-associated protein 62 (VPS62).